A 249-amino-acid chain; its full sequence is Geranylgeranylglyceryl phosphate synthase (249 aa).

2 residues coordinate Mg(2+): Asp20 and Ser49. Residues 169-175, 200-201, and 222-223 each bind sn-glycerol 1-phosphate; these read YLDAGSG, GG, and GN.

Belongs to the GGGP/HepGP synthase family. Group II subfamily. In terms of assembly, homohexamer. Requires Mg(2+) as cofactor.

It carries out the reaction sn-glycerol 1-phosphate + (2E,6E,10E)-geranylgeranyl diphosphate = sn-3-O-(geranylgeranyl)glycerol 1-phosphate + diphosphate. Prenyltransferase that catalyzes the transfer of the geranylgeranyl moiety of geranylgeranyl diphosphate (GGPP) to the C3 hydroxyl of sn-glycerol-1-phosphate (G1P). The sequence is that of Geranylgeranylglyceryl phosphate synthase from Spirosoma linguale (strain ATCC 33905 / DSM 74 / LMG 10896 / Claus 1).